Consider the following 46-residue polypeptide: Defensin-like protein AX1 (46 aa).

Intrachain disulfides connect C3-C46, C14-C34, C20-C40, and C24-C42.

In terms of tissue distribution, leaves and flowers.

Its function is as follows. Strong inhibiting activity against C.beticola and other filamentous fungi. Little or no effect against bacteria. The polypeptide is Defensin-like protein AX1 (Beta vulgaris (Sugar beet)).